Here is a 172-residue protein sequence, read N- to C-terminus: Low molecular mass early light-inducible protein HV90, chloroplastic (172 aa).

Residues 1–38 constitute a chloroplast transit peptide; the sequence is MATMMSMSSFAGAAVVPRSSASSFGARSLPALGRRALV. 2 helical membrane-spanning segments follow: residues 106-126 and 150-170; these read GQAW…VPLL and FAML…APFI.

Belongs to the ELIP/psbS family.

It is found in the plastid. The protein resides in the chloroplast membrane. Functionally, probably involved in the integration of pigments into the mature pigment-protein complexes. The protein is Low molecular mass early light-inducible protein HV90, chloroplastic of Hordeum vulgare (Barley).